Reading from the N-terminus, the 379-residue chain is Chaperone protein DnaJ (379 aa).

One can recognise a J domain in the interval 7-72 (CYYETLEVER…DKRAAYDRYG (66 aa)). The CR-type zinc-finger motif lies at 135–213 (GKTAQIEIPV…CTGSGRVTKE (79 aa)). Zn(2+)-binding residues include Cys148, Cys151, Cys165, Cys168, Cys187, Cys190, Cys201, and Cys204. 4 CXXCXGXG motif repeats span residues 148–155 (CESCSGTG), 165–172 (CSTCGGAG), 187–194 (CPSCQGRG), and 201–208 (CPSCTGSG).

Belongs to the DnaJ family. As to quaternary structure, homodimer. Zn(2+) serves as cofactor.

It localises to the cytoplasm. In terms of biological role, participates actively in the response to hyperosmotic and heat shock by preventing the aggregation of stress-denatured proteins and by disaggregating proteins, also in an autonomous, DnaK-independent fashion. Unfolded proteins bind initially to DnaJ; upon interaction with the DnaJ-bound protein, DnaK hydrolyzes its bound ATP, resulting in the formation of a stable complex. GrpE releases ADP from DnaK; ATP binding to DnaK triggers the release of the substrate protein, thus completing the reaction cycle. Several rounds of ATP-dependent interactions between DnaJ, DnaK and GrpE are required for fully efficient folding. Also involved, together with DnaK and GrpE, in the DNA replication of plasmids through activation of initiation proteins. The protein is Chaperone protein DnaJ of Rhodopseudomonas palustris (strain HaA2).